A 556-amino-acid polypeptide reads, in one-letter code: Arginine--tRNA ligase (556 aa).

Positions 132–142 match the 'HIGH' region motif; the sequence is VNPTGDLHLGH.

Belongs to the class-I aminoacyl-tRNA synthetase family. In terms of assembly, monomer.

It is found in the cytoplasm. It catalyses the reaction tRNA(Arg) + L-arginine + ATP = L-arginyl-tRNA(Arg) + AMP + diphosphate. The polypeptide is Arginine--tRNA ligase (Oceanobacillus iheyensis (strain DSM 14371 / CIP 107618 / JCM 11309 / KCTC 3954 / HTE831)).